Reading from the N-terminus, the 103-residue chain is Large ribosomal subunit protein bL21 (103 aa).

The protein belongs to the bacterial ribosomal protein bL21 family. In terms of assembly, part of the 50S ribosomal subunit. Contacts protein L20.

Functionally, this protein binds to 23S rRNA in the presence of protein L20. The sequence is that of Large ribosomal subunit protein bL21 from Laribacter hongkongensis (strain HLHK9).